We begin with the raw amino-acid sequence, 248 residues long: Biosynthetic peptidoglycan transglycosylase (248 aa).

A helical transmembrane segment spans residues 20 to 42 (WLRWLMAAPLLFAAASVLQVLIL).

The protein belongs to the glycosyltransferase 51 family.

It localises to the cell inner membrane. The catalysed reaction is [GlcNAc-(1-&gt;4)-Mur2Ac(oyl-L-Ala-gamma-D-Glu-L-Lys-D-Ala-D-Ala)](n)-di-trans,octa-cis-undecaprenyl diphosphate + beta-D-GlcNAc-(1-&gt;4)-Mur2Ac(oyl-L-Ala-gamma-D-Glu-L-Lys-D-Ala-D-Ala)-di-trans,octa-cis-undecaprenyl diphosphate = [GlcNAc-(1-&gt;4)-Mur2Ac(oyl-L-Ala-gamma-D-Glu-L-Lys-D-Ala-D-Ala)](n+1)-di-trans,octa-cis-undecaprenyl diphosphate + di-trans,octa-cis-undecaprenyl diphosphate + H(+). It participates in cell wall biogenesis; peptidoglycan biosynthesis. Peptidoglycan polymerase that catalyzes glycan chain elongation from lipid-linked precursors. This Xanthomonas euvesicatoria pv. vesicatoria (strain 85-10) (Xanthomonas campestris pv. vesicatoria) protein is Biosynthetic peptidoglycan transglycosylase.